The following is a 367-amino-acid chain: Putative transport protein MT0215 (367 aa).

9 consecutive transmembrane segments (helical) span residues 18 to 38 (AAWA…LWVL), 41 to 61 (FEVI…LVPP), 74 to 94 (VAVT…LTFV), 161 to 181 (ITEL…FLYG), 228 to 248 (AGVG…LASL), 249 to 269 (VFFG…LAVV), 270 to 290 (VALL…LIAV), 314 to 334 (VVLA…LLAV), and 337 to 357 (VAFF…ADVA).

The protein belongs to the autoinducer-2 exporter (AI-2E) (TC 2.A.86) family.

It localises to the cell membrane. This chain is Putative transport protein MT0215, found in Mycobacterium tuberculosis (strain CDC 1551 / Oshkosh).